The sequence spans 56 residues: Large ribosomal subunit protein bL33 (56 aa).

Belongs to the bacterial ribosomal protein bL33 family.

This chain is Large ribosomal subunit protein bL33, found in Actinobacillus pleuropneumoniae serotype 5b (strain L20).